Consider the following 376-residue polypeptide: Putative transmembrane protein 183BP (376 aa).

2 disordered regions span residues Met1–Lys20 and Ala102–Gly127. A helical membrane pass occupies residues Leu300–Val320.

It belongs to the TMEM183 family. In terms of tissue distribution, expressed in brain, lung, pancreas, thymus, intestine and blood. Not detected in heart, placenta, liver, muscle, kidney, spleen, prostate, testis, ovary and colon.

It is found in the membrane. This Homo sapiens (Human) protein is Putative transmembrane protein 183BP.